A 179-amino-acid polypeptide reads, in one-letter code: Guanosine-3',5'-bis(diphosphate) 3'-pyrophosphohydrolase MESH1 (179 aa).

Residue Gly-2 is modified to N-acetylglycine. N6-acetyllysine is present on Lys-25. The HD domain occupies 32–127 (YINHPIGVAR…VKLADKLYNL (96 aa)). Residues His-35, His-61, and Asp-62 each coordinate Mn(2+). Active-site nucleophile residues include Glu-65 and Asp-66. An N6-acetyllysine modification is found at Lys-97. Residue Asp-122 coordinates Mn(2+). Residue Lys-123 is modified to N6-acetyllysine.

The protein belongs to the MESH1 family. Requires Mn(2+) as cofactor.

The catalysed reaction is guanosine 3',5'-bis(diphosphate) + H2O = GDP + diphosphate + H(+). Its function is as follows. ppGpp hydrolyzing enzyme involved in starvation response. The sequence is that of Guanosine-3',5'-bis(diphosphate) 3'-pyrophosphohydrolase MESH1 (HDDC3) from Homo sapiens (Human).